We begin with the raw amino-acid sequence, 92 residues long: Small ribosomal subunit protein uS19c (92 aa).

Belongs to the universal ribosomal protein uS19 family. In terms of assembly, component of the chloroplast small ribosomal subunit (SSU). Mature 70S chloroplast ribosomes of higher plants consist of a small (30S) and a large (50S) subunit. The 30S small subunit contains 1 molecule of ribosomal RNA (16S rRNA) and 24 different proteins. The 50S large subunit contains 3 rRNA molecules (23S, 5S and 4.5S rRNA) and 33 different proteins. uS19c binds directly to 16S ribosomal RNA.

It is found in the plastid. Its subcellular location is the chloroplast. Its function is as follows. Component of the chloroplast ribosome (chloro-ribosome), a dedicated translation machinery responsible for the synthesis of chloroplast genome-encoded proteins, including proteins of the transcription and translation machinery and components of the photosynthetic apparatus. The chain is Small ribosomal subunit protein uS19c (rps19) from Spinacia oleracea (Spinach).